We begin with the raw amino-acid sequence, 268 residues long: Type III pantothenate kinase (268 aa).

6–13 (DVGNTNIV) provides a ligand contact to ATP. Substrate is bound by residues Tyr-100 and 107-110 (GADR). Residue Asp-109 is the Proton acceptor of the active site. A K(+)-binding site is contributed by Asp-129. An ATP-binding site is contributed by Thr-132. Thr-184 contacts substrate.

Belongs to the type III pantothenate kinase family. In terms of assembly, homodimer. Requires NH4(+) as cofactor. K(+) serves as cofactor.

The protein localises to the cytoplasm. It carries out the reaction (R)-pantothenate + ATP = (R)-4'-phosphopantothenate + ADP + H(+). It functions in the pathway cofactor biosynthesis; coenzyme A biosynthesis; CoA from (R)-pantothenate: step 1/5. Functionally, catalyzes the phosphorylation of pantothenate (Pan), the first step in CoA biosynthesis. The polypeptide is Type III pantothenate kinase (Alkaliphilus metalliredigens (strain QYMF)).